We begin with the raw amino-acid sequence, 201 residues long: Small ribosomal subunit protein uS4c (201 aa).

One can recognise an S4 RNA-binding domain in the interval 89–152 (MRLDNILFRL…NSRTLVQNLL (64 aa)).

This sequence belongs to the universal ribosomal protein uS4 family. In terms of assembly, part of the 30S ribosomal subunit. Contacts protein S5. The interaction surface between S4 and S5 is involved in control of translational fidelity.

It localises to the plastid. Its subcellular location is the chloroplast. One of the primary rRNA binding proteins, it binds directly to 16S rRNA where it nucleates assembly of the body of the 30S subunit. In terms of biological role, with S5 and S12 plays an important role in translational accuracy. In Olimarabidopsis pumila (Dwarf rocket), this protein is Small ribosomal subunit protein uS4c (rps4).